The sequence spans 455 residues: Probable glycine dehydrogenase (decarboxylating) subunit 1 (455 aa).

Belongs to the GcvP family. N-terminal subunit subfamily. In terms of assembly, the glycine cleavage system is composed of four proteins: P, T, L and H. In this organism, the P 'protein' is a heterodimer of two subunits.

The catalysed reaction is N(6)-[(R)-lipoyl]-L-lysyl-[glycine-cleavage complex H protein] + glycine + H(+) = N(6)-[(R)-S(8)-aminomethyldihydrolipoyl]-L-lysyl-[glycine-cleavage complex H protein] + CO2. Functionally, the glycine cleavage system catalyzes the degradation of glycine. The P protein binds the alpha-amino group of glycine through its pyridoxal phosphate cofactor; CO(2) is released and the remaining methylamine moiety is then transferred to the lipoamide cofactor of the H protein. This Saccharolobus islandicus (strain M.16.27) (Sulfolobus islandicus) protein is Probable glycine dehydrogenase (decarboxylating) subunit 1.